Consider the following 483-residue polypeptide: Aspartyl/glutamyl-tRNA(Asn/Gln) amidotransferase subunit B (483 aa).

Belongs to the GatB/GatE family. GatB subfamily. As to quaternary structure, heterotrimer of A, B and C subunits.

It carries out the reaction L-glutamyl-tRNA(Gln) + L-glutamine + ATP + H2O = L-glutaminyl-tRNA(Gln) + L-glutamate + ADP + phosphate + H(+). The catalysed reaction is L-aspartyl-tRNA(Asn) + L-glutamine + ATP + H2O = L-asparaginyl-tRNA(Asn) + L-glutamate + ADP + phosphate + 2 H(+). Its function is as follows. Allows the formation of correctly charged Asn-tRNA(Asn) or Gln-tRNA(Gln) through the transamidation of misacylated Asp-tRNA(Asn) or Glu-tRNA(Gln) in organisms which lack either or both of asparaginyl-tRNA or glutaminyl-tRNA synthetases. The reaction takes place in the presence of glutamine and ATP through an activated phospho-Asp-tRNA(Asn) or phospho-Glu-tRNA(Gln). The chain is Aspartyl/glutamyl-tRNA(Asn/Gln) amidotransferase subunit B from Rickettsia felis (strain ATCC VR-1525 / URRWXCal2) (Rickettsia azadi).